Reading from the N-terminus, the 1807-residue chain is Vitellogenin-2 (1807 aa).

A signal peptide spans Met-1–Ala-16. In terms of domain architecture, Vitellogenin spans Trp-24–Val-819. Cysteines 180 and 224 form a disulfide. The interval Ser-334 to Asn-402 is disordered. A compositionally biased stretch (low complexity) spans Val-346 to Ser-397. Residues Asn-354, Asn-579, Asn-635, Asn-1181, Asn-1304, Asn-1373, and Asn-1506 are each glycosylated (N-linked (GlcNAc...) asparagine). The 189-residue stretch at Gln-1448 to Gln-1636 folds into the VWFD domain. Disulfide bonds link Cys-1450/Cys-1599 and Cys-1472/Cys-1635. Disordered regions lie at residues Cys-1635 to Pro-1655 and Asn-1684 to Asn-1723. Asn-1693 carries an N-linked (GlcNAc...) asparagine glycan. Polar residues predominate over residues Lys-1700–Glu-1714.

The protein localises to the secreted. Its function is as follows. Precursor of the egg-yolk proteins that are sources of nutrients during embryonic development. The sequence is that of Vitellogenin-2 from Solenopsis invicta (Red imported fire ant).